We begin with the raw amino-acid sequence, 587 residues long: Inorganic phosphate transporter 2-1, chloroplastic (587 aa).

The transit peptide at 1–71 (MTLPYRFSSV…VCPLASFSSY (71 aa)) directs the protein to the chloroplast. The interval 74 to 106 (SEGEEQHHADQPIQNPHESSTVSNESDGKGNAE) is disordered. The segment covering 85–98 (PIQNPHESSTVSNE) has biased composition (polar residues). A run of 12 helical transmembrane segments spans residues 127 to 147 (AISI…KSLG), 154 to 174 (TKLL…NIGA), 195 to 215 (AVMT…THVT), 233 to 253 (MLLF…LQVA), 265 to 285 (CIVG…AVFW), 289 to 309 (AKVA…SFLV), 327 to 347 (AAAA…SAAL), 352 to 372 (IFPI…IVFD), 413 to 433 (LEIV…FMSF), 465 to 485 (IVIP…GLTM), 523 to 543 (LGLP…VGFA), and 559 to 579 (ASWL…TWIF).

The protein belongs to the inorganic phosphate transporter (PiT) (TC 2.A.20.2) family. In terms of tissue distribution, mostly expressed in young green tissues. Present in both auto- and heterotrophic tissues. Also expressed in root stele.

It localises to the plastid. Its subcellular location is the chloroplast inner membrane. Functionally, low affinity H(+)/Pi chloroplastic cotransporter. Involved in inorganic phosphate (orthophosphate, Pi) uptake in green parts of plants in Pi-sufficient conditions. Required for Pi retranslocation during Pi deprivation. This chain is Inorganic phosphate transporter 2-1, chloroplastic (PHT2-1), found in Arabidopsis thaliana (Mouse-ear cress).